The sequence spans 450 residues: Proline--tRNA ligase (450 aa).

The protein belongs to the class-II aminoacyl-tRNA synthetase family. ProS type 2 subfamily. As to quaternary structure, homodimer.

It is found in the cytoplasm. The catalysed reaction is tRNA(Pro) + L-proline + ATP = L-prolyl-tRNA(Pro) + AMP + diphosphate. Catalyzes the attachment of proline to tRNA(Pro) in a two-step reaction: proline is first activated by ATP to form Pro-AMP and then transferred to the acceptor end of tRNA(Pro). This chain is Proline--tRNA ligase, found in Paracoccus denitrificans (strain Pd 1222).